The chain runs to 788 residues: Multi-functional prenyltransferase ltmE (788 aa).

K18 and H51 together coordinate substrate. D58 contacts Mg(2+). Substrate is bound by residues R67, K151, T152, Q182, N189, and K199. Residues D283 to S337 are disordered. The span at H299–S314 shows a compositional bias: basic and acidic residues. Polar residues predominate over residues A316–S337. Position 404–405 (M404–A405) interacts with L-tryptophan. Positions 427, 599, 601, 603, and 687 each coordinate substrate.

This sequence in the N-terminal section; belongs to the FPP/GGPP synthase family. The protein in the C-terminal section; belongs to the tryptophan dimethylallyltransferase family. It depends on Mg(2+) as a cofactor.

It participates in secondary metabolite biosynthesis. Its function is as follows. Multi-functional prenyltransferase; part of the gene cluster that mediates the biosynthesis of lolitrems, indole-diterpene mycotoxins that are potent tremorgens in mammals, and are synthesized by clavicipitaceous fungal endophytes in association with their grass hosts. The geranylgeranyl diphosphate (GGPP) synthase ltmG is proposed to catalyze the first step in lolitrem biosynthesis. LtmG catalyzes a series of iterative condensations of isopentenyl diphosphate (IPP) with dimethylallyl diphosphate (DMAPP), geranyl diphosphate (GPP), and farnesyl diphosphate (FPP), to form GGPP. GGPP then condenses with indole-3-glycerol phosphate to form 3-geranylgeranylindole, an acyclic intermediate, to be incorporated into paxilline. Either ltmG or ltmC could be responsible for this step, as both are putative prenyl transferases. The FAD-dependent monooxygenase ltmM then catalyzes the epoxidation of the two terminal alkenes of the geranylgeranyl moiety, which is subsequently cyclized by ltmB, to paspaline. The cytochrome P450 monooxygenases ltmQ and ltmP can sequentially oxidize paspaline to terpendole E and terpendole F. Alternatively, ltmP converts paspaline to an intermediate which is oxidized by ltmQ to terpendole F. LtmF, ltmK, ltmE and ltmJ appear to be unique to the epichloe endophytes. The prenyltransferase ltmF is involved in the 27-hydroxyl-O-prenylation. The cytochrome P450 monooxygenase ltmK is required for the oxidative acetal ring formation. The multi-functional prenyltransferase ltmE is required for C20- and C21-prenylations of the indole ring of paspalanes and acts together with the cytochrome P450 monooxygenase ltmJ to yield lolitremanes by multiple oxidations and ring closures. The stereoisomer pairs of lolitriol and lolitrem N or lolitrem B and lolitrem F may be attributed to variations in the way in which ring closure can occur under the action of ltmJ. While the major product of this pathway is lolitrem B, the prenyl transferases and cytochrome P450 monooxygenases identified in this pathway have a remarkable versatility in their regio- and stereo-specificities to generate a diverse range of metabolites that are products of a metabolic grid rather than a linear pathway. The polypeptide is Multi-functional prenyltransferase ltmE (Epichloe festucae var. lolii (Neotyphodium lolii)).